Reading from the N-terminus, the 610-residue chain is Preterminal protein (610 aa).

The segment at 288-379 (TLRSGTQTGL…ESFSDDVGLS (92 aa)) is disordered. The Nuclear localization signal motif lies at 328 to 337 (SLPIRRRRRR). Positions 331–340 (IRRRRRRGTR) are enriched in basic residues. Positions 341 to 350 (RQVEREDSVR) are enriched in basic and acidic residues. Ser549 is modified (O-(5'-phospho-DNA)-serine).

Belongs to the adenoviridae terminal protein family. In terms of assembly, heterodimer with the polymerase; this heterodimer binds to bp 9 to 18 of the genome. Interacts with host POU2F1; POU2F1 binds to the auxiliary sequences in the inverted terminal repeats and tethers the pTP-POL heterodimer to the origin DNA thereby participating in the assembly of the pre-initiation complex (POL-TP-DBP-NFIA-POU2F1). Preterminal protein is used to replicate viral genome, upon genomic encapsidation it is processed first into iTP and finally into TP by adenovirus protease.

The protein localises to the host nucleus matrix. In terms of biological role, protein covalently bound to the viral DNA that acts as a primer for viral genomic replication by DNA strand displacement. Assembles on the viral origin of replication in an initiation complex with viral polymerase, DBP, host NFIA and host POU2F1/OCT1. During initiation, the polymerase covalently couples the first dCTP with Ser-580 of pTP. The terminal protein stimulates the template activity over 20 fold compared to protein-free templates. Neo-synthesized viral genomes are linked to two preterminal proteins, one for each 5' end. These new genomes are encapsidated in the nucleus, and during capsid maturation by viral protease, preterminal protein is first cleaved into intermediary (iTP), then into mature TP. May play a role in host nuclear matrix localization of genomic DNA. The protein is Preterminal protein of Snake adenovirus serotype 1 (SnAdV-1).